The chain runs to 305 residues: Acyl transferase (305 aa).

Residues Ser-114, Asp-211, and His-241 each act as charge relay system in the active site.

It belongs to the LuxD family.

It participates in lipid metabolism; fatty acid reduction for biolumincescence. Its function is as follows. Acyl transferase is part of the fatty acid reductase system required for aldehyde biosynthesis; it produces fatty acids for the luminescent reaction. This Vibrio harveyi (Beneckea harveyi) protein is Acyl transferase (luxD).